The primary structure comprises 441 residues: Histidine--tRNA ligase (441 aa).

This sequence belongs to the class-II aminoacyl-tRNA synthetase family. In terms of assembly, homodimer.

Its subcellular location is the cytoplasm. It carries out the reaction tRNA(His) + L-histidine + ATP = L-histidyl-tRNA(His) + AMP + diphosphate + H(+). The sequence is that of Histidine--tRNA ligase from Koribacter versatilis (strain Ellin345).